We begin with the raw amino-acid sequence, 308 residues long: MAEITAALVKELRDRTGAGMMDCKKALAENNGDIEASIDWLRTKGLAAAAKKAGRVAAEGLVGFATDGTRGALVEVNSETDFVGKNEQFQAFVRDVTQVALAEGITDIDALAAAPYPTGGTVAEQLTSNIATIGENQSLRRVALLTVNSGAVTGYVHNAAAPGMGKIGVLVALESSAGADVLEPLGKQLAMHVAAANPLALNGDDLDADLVARERAIAEEKAAQSGKPAEIVAKMVDGAIAKFRKENALLSQLFVMDGKTPVAEVVAAAGKDVGAAITLKGFVRFQLGEGIEKEESDFAAEVAAAAGV.

The segment at 80–83 (TDFV) is involved in Mg(2+) ion dislocation from EF-Tu.

Belongs to the EF-Ts family.

It is found in the cytoplasm. Its function is as follows. Associates with the EF-Tu.GDP complex and induces the exchange of GDP to GTP. It remains bound to the aminoacyl-tRNA.EF-Tu.GTP complex up to the GTP hydrolysis stage on the ribosome. This chain is Elongation factor Ts, found in Sphingopyxis alaskensis (strain DSM 13593 / LMG 18877 / RB2256) (Sphingomonas alaskensis).